Here is a 571-residue protein sequence, read N- to C-terminus: Glutamate--tRNA ligase (571 aa).

The 'HIGH' region signature appears at 110-120 (PNPNGPGTLGS).

It belongs to the class-I aminoacyl-tRNA synthetase family. Glutamate--tRNA ligase type 2 subfamily.

It localises to the cytoplasm. The enzyme catalyses tRNA(Glu) + L-glutamate + ATP = L-glutamyl-tRNA(Glu) + AMP + diphosphate. In terms of biological role, catalyzes the attachment of glutamate to tRNA(Glu) in a two-step reaction: glutamate is first activated by ATP to form Glu-AMP and then transferred to the acceptor end of tRNA(Glu). This chain is Glutamate--tRNA ligase, found in Methanosarcina acetivorans (strain ATCC 35395 / DSM 2834 / JCM 12185 / C2A).